Here is a 327-residue protein sequence, read N- to C-terminus: Methionyl-tRNA formyltransferase (327 aa).

Position 117–120 (117–120 (SLLP)) interacts with (6S)-5,6,7,8-tetrahydrofolate.

The protein belongs to the Fmt family.

The enzyme catalyses L-methionyl-tRNA(fMet) + (6R)-10-formyltetrahydrofolate = N-formyl-L-methionyl-tRNA(fMet) + (6S)-5,6,7,8-tetrahydrofolate + H(+). Functionally, attaches a formyl group to the free amino group of methionyl-tRNA(fMet). The formyl group appears to play a dual role in the initiator identity of N-formylmethionyl-tRNA by promoting its recognition by IF2 and preventing the misappropriation of this tRNA by the elongation apparatus. The protein is Methionyl-tRNA formyltransferase of Delftia acidovorans (strain DSM 14801 / SPH-1).